The primary structure comprises 117 residues: Large ribosomal subunit protein bL20c (117 aa).

This sequence belongs to the bacterial ribosomal protein bL20 family.

It is found in the plastid. The protein localises to the chloroplast. Binds directly to 23S ribosomal RNA and is necessary for the in vitro assembly process of the 50S ribosomal subunit. It is not involved in the protein synthesizing functions of that subunit. This is Large ribosomal subunit protein bL20c from Draba nemorosa (Woodland whitlowgrass).